Reading from the N-terminus, the 351-residue chain is Autoinducer 2 import system permease protein LsrC (351 aa).

9 helical membrane passes run leucine 14 to leucine 34, methionine 39 to leucine 59, isoleucine 70 to alanine 90, leucine 93 to leucine 113, isoleucine 115 to leucine 135, isoleucine 155 to tryptophan 175, methionine 213 to proline 233, glycine 252 to leucine 272, and leucine 284 to aspartate 304.

It belongs to the binding-protein-dependent transport system permease family. AraH/RbsC subfamily. In terms of assembly, the complex is composed of two ATP-binding proteins (LsrA), two transmembrane proteins (LsrC and LsrD) and a solute-binding protein (LsrB).

The protein localises to the cell inner membrane. Its function is as follows. Part of the ABC transporter complex LsrABCD involved in autoinducer 2 (AI-2) import. Probably responsible for the translocation of the substrate across the membrane. This Yersinia pestis bv. Antiqua (strain Antiqua) protein is Autoinducer 2 import system permease protein LsrC (lsrC).